The following is a 374-amino-acid chain: DNA integrity scanning protein DisA (374 aa).

In terms of domain architecture, DAC spans 20-158; that stretch reads EALMRASLSA…DGERRVLEES (139 aa). ATP is bound by residues Gly87, Leu105, and 118-122; that span reads TRHRT.

This sequence belongs to the DisA family. Homooctamer. The cofactor is Mg(2+).

It carries out the reaction 2 ATP = 3',3'-c-di-AMP + 2 diphosphate. Participates in a DNA-damage check-point that is active prior to asymmetric division when DNA is damaged. DisA forms globular foci that rapidly scan along the chromosomes during sporulation, searching for lesions. When a lesion is present, DisA pauses at the lesion site. This triggers a cellular response that culminates in a temporary block in sporulation initiation. Its function is as follows. Also has diadenylate cyclase activity, catalyzing the condensation of 2 ATP molecules into cyclic di-AMP (c-di-AMP). c-di-AMP acts as a signaling molecule that couples DNA integrity with progression of sporulation. The rise in c-di-AMP level generated by DisA while scanning the chromosome, operates as a positive signal that advances sporulation; upon encountering a lesion, the DisA focus arrests at the damaged site and halts c-di-AMP synthesis. The polypeptide is DNA integrity scanning protein DisA (Streptomyces griseus subsp. griseus (strain JCM 4626 / CBS 651.72 / NBRC 13350 / KCC S-0626 / ISP 5235)).